The primary structure comprises 1687 residues: Brefeldin A-inhibited guanine nucleotide-exchange protein 1 (1687 aa).

Positions 494 to 529 are disordered; the sequence is SLENEAPANNHSNSNEEDGTTIDHDFHPDLNPESSD. A compositionally biased stretch (basic and acidic residues) spans 514 to 523; the sequence is TIDHDFHPDL. The SEC7 domain occupies 532–719; that stretch reads TLEQRRAYKI…GALYDQVVIN (188 aa). E634 is a catalytic residue. The tract at residues 1229 to 1248 is disordered; the sequence is KGRSSSPSTPVTDDHSPSTQ. The segment covering 1232–1248 has biased composition (polar residues); the sequence is SSSPSTPVTDDHSPSTQ.

As to quaternary structure, homodimer.

The protein resides in the cytoplasm. The protein localises to the cytosol. Its subcellular location is the membrane. With respect to regulation, inhibited by brefeldin A. Activates the ARF proteins by exchanging bound GDP for free GTP. Plays a role in vesicular protein sorting. The chain is Brefeldin A-inhibited guanine nucleotide-exchange protein 1 (BIG1) from Arabidopsis thaliana (Mouse-ear cress).